The chain runs to 373 residues: MKYTKQNFMMSVLGIIIYVTDLIVDIWVSVRFFHEGQYVFSALALSFMLFGTLVAQCFSYSWFKADLKKAGQESQHCFLLLHCLQGGVFTRYWFALKRGYHAAFKYDSNTSNFVEEQIDLHKEVIDRVTDLSMLRLFETYLEGCPQLILQLYILLEHGQANFSQYAAIMVSCCAISWSTVDYQVALRKSLPDKKLLNGLCPKITYLFYKLFTLLSWMLSVVLLLFLNVKIALFLLLFLWLLGIIWAFKNNTQFCTCISMEFLYRIVVGFILIFTFFNIKGQNTKCPMSCYYIVRVLGTLGILTVFWVCPLTIFNPDYFIPISITIVLTLLLGILFLIVYYGSFHPNRSAETKCDEIDGKPVLRECRMRYFLME.

8 consecutive transmembrane segments (helical) span residues 8–28 (FMMS…DIWV), 38–58 (YVFS…AQCF), 166–186 (AAIM…QVAL), 203–223 (ITYL…VVLL), 224–244 (LFLN…LGII), 256–276 (CISM…FTFF), 295–315 (VLGT…IFNP), and 318–338 (FIPI…FLIV).

The protein belongs to the XK family. In terms of processing, undergoes proteolytic processing by caspase-3 (CASP3), caspase-6 (CASP6) and caspase-7 (CASP7) to generate the XK-related protein 9, processed form, leading to its activation.

It localises to the cell membrane. The catalysed reaction is a 1,2-diacyl-sn-glycero-3-phospho-L-serine(in) = a 1,2-diacyl-sn-glycero-3-phospho-L-serine(out). Its activity is regulated as follows. Activated upon caspase cleavage to generate the XK-related protein 9, processed form. Does not act prior the onset of apoptosis. Phospholipid scramblase that promotes phosphatidylserine exposure on apoptotic cell surface. Phosphatidylserine is a specific marker only present at the surface of apoptotic cells and acts as a specific signal for engulfment. The chain is XK-related protein 9 from Homo sapiens (Human).